A 296-amino-acid chain; its full sequence is Small ribosomal subunit protein uS2 (296 aa).

Residues Thr-252 to Thr-296 form a disordered region.

It belongs to the universal ribosomal protein uS2 family.

The protein is Small ribosomal subunit protein uS2 (rpsB) of Rickettsia prowazekii (strain Madrid E).